The sequence spans 245 residues: 1-(5-phosphoribosyl)-5-[(5-phosphoribosylamino)methylideneamino] imidazole-4-carboxamide isomerase (245 aa).

The active-site Proton acceptor is aspartate 7. Aspartate 129 functions as the Proton donor in the catalytic mechanism.

This sequence belongs to the HisA/HisF family.

It is found in the cytoplasm. It carries out the reaction 1-(5-phospho-beta-D-ribosyl)-5-[(5-phospho-beta-D-ribosylamino)methylideneamino]imidazole-4-carboxamide = 5-[(5-phospho-1-deoxy-D-ribulos-1-ylimino)methylamino]-1-(5-phospho-beta-D-ribosyl)imidazole-4-carboxamide. It functions in the pathway amino-acid biosynthesis; L-histidine biosynthesis; L-histidine from 5-phospho-alpha-D-ribose 1-diphosphate: step 4/9. This chain is 1-(5-phosphoribosyl)-5-[(5-phosphoribosylamino)methylideneamino] imidazole-4-carboxamide isomerase, found in Shigella boydii serotype 18 (strain CDC 3083-94 / BS512).